The primary structure comprises 332 residues: Tetraacyldisaccharide 4'-kinase (332 aa).

Glycine 55–threonine 62 serves as a coordination point for ATP.

This sequence belongs to the LpxK family.

The catalysed reaction is a lipid A disaccharide + ATP = a lipid IVA + ADP + H(+). It participates in glycolipid biosynthesis; lipid IV(A) biosynthesis; lipid IV(A) from (3R)-3-hydroxytetradecanoyl-[acyl-carrier-protein] and UDP-N-acetyl-alpha-D-glucosamine: step 6/6. Functionally, transfers the gamma-phosphate of ATP to the 4'-position of a tetraacyldisaccharide 1-phosphate intermediate (termed DS-1-P) to form tetraacyldisaccharide 1,4'-bis-phosphate (lipid IVA). This chain is Tetraacyldisaccharide 4'-kinase, found in Acidithiobacillus ferrooxidans (strain ATCC 53993 / BNL-5-31) (Leptospirillum ferrooxidans (ATCC 53993)).